The sequence spans 152 residues: TOMM20-like protein 1 (152 aa).

The Mitochondrial intermembrane portion of the chain corresponds to 1-9 (MPSVRSLLR). A helical transmembrane segment spans residues 10–29 (LLAAAAACGAFAFLGYCIYL). Over 30-152 (NRKRRGDPAF…EQDCLEDDPD (123 aa)) the chain is Cytoplasmic. A disordered region spans residues 43-62 (LRDKRRAEPQKAEEQGTQLW). The span at 47 to 56 (RRAEPQKAEE) shows a compositional bias: basic and acidic residues.

Belongs to the Tom20 family.

It is found in the mitochondrion outer membrane. In Homo sapiens (Human), this protein is TOMM20-like protein 1 (TOMM20L).